A 1196-amino-acid chain; its full sequence is DNA-directed RNA polymerase I subunit RPA2 (1196 aa).

The C4-type zinc-finger motif lies at Cys-1097–Cys-1124.

This sequence belongs to the RNA polymerase beta chain family. As to quaternary structure, component of the RNA polymerase I (Pol I) complex consisting of 14 subunits.

Its subcellular location is the nucleus. It is found in the nucleolus. It carries out the reaction RNA(n) + a ribonucleoside 5'-triphosphate = RNA(n+1) + diphosphate. Functionally, DNA-dependent RNA polymerase catalyzes the transcription of DNA into RNA using the four ribonucleoside triphosphates as substrates. Second largest core component of RNA polymerase I which synthesizes ribosomal RNA precursors. Proposed to contribute to the polymerase catalytic activity and forms the polymerase active center together with the largest subunit. Pol I is composed of mobile elements and RPA2 is part of the core element with the central large cleft and probably a clamp element that moves to open and close the cleft. This chain is DNA-directed RNA polymerase I subunit RPA2 (RPA2), found in Eremothecium gossypii (strain ATCC 10895 / CBS 109.51 / FGSC 9923 / NRRL Y-1056) (Yeast).